We begin with the raw amino-acid sequence, 115 residues long: Large ribosomal subunit protein bL19 (115 aa).

The protein belongs to the bacterial ribosomal protein bL19 family.

Its function is as follows. This protein is located at the 30S-50S ribosomal subunit interface and may play a role in the structure and function of the aminoacyl-tRNA binding site. This chain is Large ribosomal subunit protein bL19, found in Shouchella clausii (strain KSM-K16) (Alkalihalobacillus clausii).